Reading from the N-terminus, the 61-residue chain is Insect toxin BsIT1 (61 aa).

The region spanning Asp-1–Cys-61 is the LCN-type CS-alpha/beta domain. Cystine bridges form between Cys-10–Cys-61, Cys-14–Cys-35, Cys-21–Cys-42, and Cys-25–Cys-44.

Belongs to the long (4 C-C) scorpion toxin superfamily. Sodium channel inhibitor family. Beta subfamily. As to expression, expressed by the venom gland.

It is found in the secreted. Functionally, depressant insect beta-toxins cause a transient contraction paralysis followed by a slow flaccid paralysis. They bind voltage-independently at site-4 of sodium channels (Nav) and shift the voltage of activation toward more negative potentials thereby affecting sodium channel activation and promoting spontaneous and repetitive firing. This toxin is active only on insects and causes a transient contraction paralysis followed by a slow flaccid paralysis. In Hottentotta tamulus sindicus (Scorpion), this protein is Insect toxin BsIT1.